The chain runs to 202 residues: Imidazoleglycerol-phosphate dehydratase (202 aa).

This sequence belongs to the imidazoleglycerol-phosphate dehydratase family.

It is found in the cytoplasm. It catalyses the reaction D-erythro-1-(imidazol-4-yl)glycerol 3-phosphate = 3-(imidazol-4-yl)-2-oxopropyl phosphate + H2O. The protein operates within amino-acid biosynthesis; L-histidine biosynthesis; L-histidine from 5-phospho-alpha-D-ribose 1-diphosphate: step 6/9. This is Imidazoleglycerol-phosphate dehydratase from Corynebacterium efficiens (strain DSM 44549 / YS-314 / AJ 12310 / JCM 11189 / NBRC 100395).